Here is a 339-residue protein sequence, read N- to C-terminus: NADH-quinone oxidoreductase subunit H (339 aa).

Transmembrane regions (helical) follow at residues 19–39, 87–107, 120–140, 153–173, 191–211, 253–273, 275–295, and 310–330; these read LLKI…LTLA, FLLG…VVPF, LLYI…AGWA, SAAQ…GVLM, FWEW…ISAV, ILVA…PVPF, PDSI…FLWF, and LGWK…GAMM.

It belongs to the complex I subunit 1 family. In terms of assembly, NDH-1 is composed of 14 different subunits. Subunits NuoA, H, J, K, L, M, N constitute the membrane sector of the complex.

The protein localises to the cell inner membrane. The enzyme catalyses a quinone + NADH + 5 H(+)(in) = a quinol + NAD(+) + 4 H(+)(out). Functionally, NDH-1 shuttles electrons from NADH, via FMN and iron-sulfur (Fe-S) centers, to quinones in the respiratory chain. The immediate electron acceptor for the enzyme in this species is believed to be ubiquinone. Couples the redox reaction to proton translocation (for every two electrons transferred, four hydrogen ions are translocated across the cytoplasmic membrane), and thus conserves the redox energy in a proton gradient. This subunit may bind ubiquinone. This chain is NADH-quinone oxidoreductase subunit H, found in Methylobacillus flagellatus (strain ATCC 51484 / DSM 6875 / VKM B-1610 / KT).